A 531-amino-acid polypeptide reads, in one-letter code: MSQEILDQVRRRRTFAIISHPDAGKTTLTEKLLLFSGAIQSAGTVKGKKTGKFATSDWMDIEKQRGISVASSVMQFDYKDHTVNLLDTPGHQDFSEDTYRVLTAVDSALMVIDAAKGVEAQTIKLLNVCRLRDTPIVTFMNKYDREVRDSLELLDEVENILQIRCAPVTWPIGMGKNFKGVYHILNDEIYLFEAGGERLPHEFDIIKGIDNPELEQRFPLEIQQLRDEIELVQAASNEFNLDEFLAGELTPVFFGSAINNFGIQEILNSLIDWAPAPKPRDATVRMVEPDEAKFSGFIFKIQANMDPKHRDRIAFLRVCSGKFERGMKMKHLRINREIAASSVVTFMSHDRELVEEAYAGDIIGIPNHGNIQIGDSFSEGEQLAFTGIPFFAPELFRSVRIKNPLKIKQLQKGLQQLGEEGAVQVFKPMSGADLILGAVGVLQFEVVTSRLANEYGVEAVFDSASIWSARWVSCDDKKKLAEFEKANAGNLAIDAGGNLAYLAPNRVNLGLTQERWPDIVFHETREHSVKL.

A tr-type G domain is found at 10–278 (RRRRTFAIIS…SLIDWAPAPK (269 aa)). GTP is bound by residues 19-26 (SHPDAGKT), 87-91 (DTPGH), and 141-144 (NKYD).

This sequence belongs to the TRAFAC class translation factor GTPase superfamily. Classic translation factor GTPase family. PrfC subfamily.

Its subcellular location is the cytoplasm. Increases the formation of ribosomal termination complexes and stimulates activities of RF-1 and RF-2. It binds guanine nucleotides and has strong preference for UGA stop codons. It may interact directly with the ribosome. The stimulation of RF-1 and RF-2 is significantly reduced by GTP and GDP, but not by GMP. This Neisseria meningitidis serogroup C / serotype 2a (strain ATCC 700532 / DSM 15464 / FAM18) protein is Peptide chain release factor 3.